A 553-amino-acid chain; its full sequence is Telomere repeat-binding protein 2 (553 aa).

Residues 147–170 (SSTEVGACGNGSPNESRDDVNLFS) are disordered. Residues 285 to 364 (VKLRIKSFRV…HLDSLGFSLE (80 aa)) form the Ubiquitin-like domain. The interval 394–413 (ALDSSHEPEPSPADSFGKLG) is disordered. One can recognise an HTH myb-type domain in the interval 448–507 (AQRRIRRPFSVTEVEALVQAVEKLGTGRWRDVKVRAFEDADHRTYVDLKDKWKTLVHTAR). Residues 476-503 (WRDVKVRAFEDADHRTYVDLKDKWKTLV) constitute a DNA-binding region (H-T-H motif).

In terms of assembly, homodimer and heterodimer with TRP1. Interacts with SNL1. In terms of tissue distribution, expressed ubiquitously. Highest expression in flowers and leaves.

The protein localises to the nucleus. Binds specifically to the plant telomeric double-stranded DNA sequences. At least 2 repeats of telomeric sequences are required for binding. Induces DNA bending. The polypeptide is Telomere repeat-binding protein 2 (TRP2) (Arabidopsis thaliana (Mouse-ear cress)).